A 914-amino-acid chain; its full sequence is DNA mismatch repair protein MutS (914 aa).

Residues 1–24 (MDNKTDNKNNLTPQSAPSSAPHKE) form a disordered region. Polar residues predominate over residues 8–18 (KNNLTPQSAPS). An ATP-binding site is contributed by 662 to 669 (GPNMGGKS).

It belongs to the DNA mismatch repair MutS family.

This protein is involved in the repair of mismatches in DNA. It is possible that it carries out the mismatch recognition step. This protein has a weak ATPase activity. The chain is DNA mismatch repair protein MutS from Bartonella henselae (strain ATCC 49882 / DSM 28221 / CCUG 30454 / Houston 1) (Rochalimaea henselae).